The sequence spans 61 residues: Small ribosomal subunit protein uS14 (61 aa).

Positions 24, 27, 40, and 43 each coordinate Zn(2+).

This sequence belongs to the universal ribosomal protein uS14 family. Zinc-binding uS14 subfamily. Part of the 30S ribosomal subunit. Contacts proteins S3 and S10. Zn(2+) is required as a cofactor.

Functionally, binds 16S rRNA, required for the assembly of 30S particles and may also be responsible for determining the conformation of the 16S rRNA at the A site. The protein is Small ribosomal subunit protein uS14 of Campylobacter fetus subsp. fetus (strain 82-40).